The chain runs to 395 residues: Nuclear hormone receptor family member nhr-10 (395 aa).

The segment at residues 15-90 (EEVCLVCSDI…VGMDRNAIQQ (76 aa)) is a DNA-binding region (nuclear receptor). 2 NR C4-type zinc fingers span residues 18-38 (CLVCSDISTGYHYGVPSCNGC) and 54-78 (CQFQGKCPVDKSIRCACRHCRFEKC). The NR LBD domain occupies 152 to 392 (PSRTLIEAVV…TFAKQLLFGI (241 aa)).

This sequence belongs to the nuclear hormone receptor family.

The protein resides in the nucleus. Functionally, probable transcription factor that acts in a feed-forward loop with nhr-68 to activate genes involved in the vitamin B12-independent breakdown of the short-chain fatty acid propionate. This pathway is triggered in response to a diet low in vitamin B12, when canonical vitamin B12-dependent propionate breakdown cannot function; the resulting accumulation of propionate is probably sensed by nhr-10 and/or nhr-68. The protein is Nuclear hormone receptor family member nhr-10 (nhr-10) of Caenorhabditis elegans.